Consider the following 333-residue polypeptide: Ribosome biogenesis regulatory protein homolog (333 aa).

Disordered regions lie at residues 227-248 and 271-333; these read KANVKTGKKRKFEANEAPVSGE and AAAV…ARKG. The segment covering 278–295 has biased composition (basic and acidic residues); sequence LREKKEKSERKGAKDQTR. Residues 324–333 show a composition bias toward basic residues; it reads GANKAKARKG.

Belongs to the RRS1 family.

The protein localises to the nucleus. The protein resides in the nucleolus. Its function is as follows. Involved in ribosomal large subunit assembly. This chain is Ribosome biogenesis regulatory protein homolog, found in Caenorhabditis elegans.